Consider the following 185-residue polypeptide: Large ribosomal subunit protein uL5 (185 aa).

It belongs to the universal ribosomal protein uL5 family. As to quaternary structure, part of the 50S ribosomal subunit; part of the 5S rRNA/L5/L18/L25 subcomplex. Contacts the 5S rRNA and the P site tRNA. Forms a bridge to the 30S subunit in the 70S ribosome.

In terms of biological role, this is one of the proteins that bind and probably mediate the attachment of the 5S RNA into the large ribosomal subunit, where it forms part of the central protuberance. In the 70S ribosome it contacts protein S13 of the 30S subunit (bridge B1b), connecting the 2 subunits; this bridge is implicated in subunit movement. Contacts the P site tRNA; the 5S rRNA and some of its associated proteins might help stabilize positioning of ribosome-bound tRNAs. In Bartonella quintana (strain Toulouse) (Rochalimaea quintana), this protein is Large ribosomal subunit protein uL5.